The sequence spans 438 residues: Protein ROOT INITIATION DEFECTIVE 3 (438 aa).

6 WD repeats span residues 36 to 74 (AHGLTAVGEKFLASSQLSARNTSGSIFYWSWTKPQAEVK), 76 to 115 (YPVEPIKALAANNEGTYLVGGGISGDIYLWEVATGKLLKK), 118 to 157 (GHYRSVTCLVFSGDDSLLVSGSQDGSIRVWSLIRLFDDFQ), 171 to 212 (EHTM…LLKN), 214 to 253 (IFPSVINALALDPGGCVFYAGARDSKIYIGAINATSEYGT), and 261 to 300 (EKGKAITCLAYCADGNLLISGSEDGVVCVWDPKSLRHVRT). Residues 394–434 (AATEMEMERLKLEYKRSLQMNEQWQKNYENLLQVVMEEEQI) adopt a coiled-coil conformation.

Involved in meristem development. Acts as a negative regulator of the CUC-STM pathway in shoot apical meristem (SAM) neo-formation. This is Protein ROOT INITIATION DEFECTIVE 3 (RID3) from Arabidopsis thaliana (Mouse-ear cress).